The following is a 194-amino-acid chain: MSRQKKSRNIVDVMPQRKSDKSQISPASYARPSKKLTRYELDAKAREDKKKKKHKGLTSGSRHSRSEQHNNQQMQEKRDPRLGSRKKVPLVVEFVNNPEKGQFIQPVQVQPAEEKVKKLDPMLELEQLENNECLNQLLDALDEGKTISAEDQKFVDECLDRIAQLMDELGIEDEEESEDDLLRTFEKIDINQFK.

Residues 1–87 (MSRQKKSRNI…RDPRLGSRKK (87 aa)) form a disordered region. Over residues 37–48 (TRYELDAKARED) the composition is skewed to basic and acidic residues.

The protein belongs to the YihI family. In terms of assembly, interacts with Der.

A GTPase-activating protein (GAP) that modifies Der/EngA GTPase function. May play a role in ribosome biogenesis. This chain is Der GTPase-activating protein YihI, found in Mannheimia succiniciproducens (strain KCTC 0769BP / MBEL55E).